A 279-amino-acid chain; its full sequence is Tryptophan 2,3-dioxygenase (279 aa).

Substrate is bound by residues 48–52, Y110, and R114; that span reads FIVIH. H237 contributes to the heme binding site. T251 is a substrate binding site.

Belongs to the tryptophan 2,3-dioxygenase family. As to quaternary structure, homotetramer. It depends on heme as a cofactor.

It catalyses the reaction L-tryptophan + O2 = N-formyl-L-kynurenine. It participates in amino-acid degradation; L-tryptophan degradation via kynurenine pathway; L-kynurenine from L-tryptophan: step 1/2. Heme-dependent dioxygenase that catalyzes the oxidative cleavage of the L-tryptophan (L-Trp) pyrrole ring and converts L-tryptophan to N-formyl-L-kynurenine. Catalyzes the oxidative cleavage of the indole moiety. This chain is Tryptophan 2,3-dioxygenase, found in Bacillus thuringiensis (strain Al Hakam).